A 267-amino-acid polypeptide reads, in one-letter code: Tryptophan synthase alpha chain (267 aa).

Residues glutamate 47 and aspartate 58 each act as proton acceptor in the active site.

The protein belongs to the TrpA family. In terms of assembly, tetramer of two alpha and two beta chains.

The enzyme catalyses (1S,2R)-1-C-(indol-3-yl)glycerol 3-phosphate + L-serine = D-glyceraldehyde 3-phosphate + L-tryptophan + H2O. Its pathway is amino-acid biosynthesis; L-tryptophan biosynthesis; L-tryptophan from chorismate: step 5/5. The alpha subunit is responsible for the aldol cleavage of indoleglycerol phosphate to indole and glyceraldehyde 3-phosphate. This chain is Tryptophan synthase alpha chain, found in Prosthecochloris aestuarii (strain DSM 271 / SK 413).